We begin with the raw amino-acid sequence, 302 residues long: Uroporphyrinogen-III synthase, chloroplastic (302 aa).

Positions 1-39 (MALSSSSHLLPFSRPPATFPRARHAGGGRGRAGATGRFI) are disordered. A chloroplast-targeting transit peptide spans 1 to 50 (MALSSSSHLLPFSRPPATFPRARHAGGGRGRAGATGRFIACSSPPPPDVV).

It belongs to the uroporphyrinogen-III synthase family.

Its subcellular location is the plastid. It localises to the chloroplast. The enzyme catalyses hydroxymethylbilane = uroporphyrinogen III + H2O. Its pathway is porphyrin-containing compound metabolism; protoporphyrin-IX biosynthesis; coproporphyrinogen-III from 5-aminolevulinate: step 3/4. In terms of biological role, catalyzes cyclization of the linear tetrapyrrole, hydroxymethylbilane, to the macrocyclic uroporphyrinogen III, a precursor of tetrapyrroles such as chlorophyll, heme and phycobilins. This Oryza sativa subsp. japonica (Rice) protein is Uroporphyrinogen-III synthase, chloroplastic (UROS).